Reading from the N-terminus, the 197-residue chain is Imidazoleglycerol-phosphate dehydratase (197 aa).

This sequence belongs to the imidazoleglycerol-phosphate dehydratase family.

It is found in the cytoplasm. The catalysed reaction is D-erythro-1-(imidazol-4-yl)glycerol 3-phosphate = 3-(imidazol-4-yl)-2-oxopropyl phosphate + H2O. It functions in the pathway amino-acid biosynthesis; L-histidine biosynthesis; L-histidine from 5-phospho-alpha-D-ribose 1-diphosphate: step 6/9. In Chromohalobacter salexigens (strain ATCC BAA-138 / DSM 3043 / CIP 106854 / NCIMB 13768 / 1H11), this protein is Imidazoleglycerol-phosphate dehydratase.